A 338-amino-acid polypeptide reads, in one-letter code: 1-aminocyclopropane-1-carboxylate deaminase (338 aa).

K51 is subject to N6-(pyridoxal phosphate)lysine. The Nucleophile role is filled by S78.

This sequence belongs to the ACC deaminase/D-cysteine desulfhydrase family. In terms of assembly, homotrimer. It depends on pyridoxal 5'-phosphate as a cofactor.

The enzyme catalyses 1-aminocyclopropane-1-carboxylate + H2O = 2-oxobutanoate + NH4(+). Functionally, catalyzes a cyclopropane ring-opening reaction, the irreversible conversion of 1-aminocyclopropane-1-carboxylate (ACC) to ammonia and alpha-ketobutyrate. Allows growth on ACC as a nitrogen source. The sequence is that of 1-aminocyclopropane-1-carboxylate deaminase from Pseudomonas syringae pv. tomato (strain ATCC BAA-871 / DC3000).